We begin with the raw amino-acid sequence, 200 residues long: Pyridoxal 5'-phosphate synthase subunit PdxT (200 aa).

An L-glutamine-binding site is contributed by 52–54; that stretch reads GES. Catalysis depends on C84, which acts as the Nucleophile. L-glutamine is bound by residues R116 and 145-146; that span reads IR. Catalysis depends on charge relay system residues H181 and E183.

Belongs to the glutaminase PdxT/SNO family. As to quaternary structure, in the presence of PdxS, forms a dodecamer of heterodimers. Only shows activity in the heterodimer.

The catalysed reaction is aldehydo-D-ribose 5-phosphate + D-glyceraldehyde 3-phosphate + L-glutamine = pyridoxal 5'-phosphate + L-glutamate + phosphate + 3 H2O + H(+). It catalyses the reaction L-glutamine + H2O = L-glutamate + NH4(+). It functions in the pathway cofactor biosynthesis; pyridoxal 5'-phosphate biosynthesis. Its function is as follows. Catalyzes the hydrolysis of glutamine to glutamate and ammonia as part of the biosynthesis of pyridoxal 5'-phosphate. The resulting ammonia molecule is channeled to the active site of PdxS. The chain is Pyridoxal 5'-phosphate synthase subunit PdxT from Saccharolobus islandicus (strain L.S.2.15 / Lassen #1) (Sulfolobus islandicus).